A 284-amino-acid polypeptide reads, in one-letter code: Bifunctional protein FolD (284 aa).

NADP(+)-binding positions include 165–167 (GRS) and Ser190.

This sequence belongs to the tetrahydrofolate dehydrogenase/cyclohydrolase family. In terms of assembly, homodimer.

It catalyses the reaction (6R)-5,10-methylene-5,6,7,8-tetrahydrofolate + NADP(+) = (6R)-5,10-methenyltetrahydrofolate + NADPH. The catalysed reaction is (6R)-5,10-methenyltetrahydrofolate + H2O = (6R)-10-formyltetrahydrofolate + H(+). It functions in the pathway one-carbon metabolism; tetrahydrofolate interconversion. Catalyzes the oxidation of 5,10-methylenetetrahydrofolate to 5,10-methenyltetrahydrofolate and then the hydrolysis of 5,10-methenyltetrahydrofolate to 10-formyltetrahydrofolate. The protein is Bifunctional protein FolD of Streptococcus gordonii (strain Challis / ATCC 35105 / BCRC 15272 / CH1 / DL1 / V288).